The sequence spans 289 residues: D-xylonolactone lactonase (289 aa).

Residue E17 coordinates Fe(2+). Positions 98, 100, 119, and 145 each coordinate D-xylono-1,5-lactone. Residues N145 and D195 each contribute to the Fe(2+) site. The active-site Proton donor/acceptor is D195.

The protein belongs to the SMP-30/CGR1 family. It depends on Fe(2+) as a cofactor.

It carries out the reaction D-xylono-1,5-lactone + H2O = D-xylonate + H(+). Functionally, involved in the degradation of D-xylose. Catalyzes the hydrolysis of D-xylonolactone to D-xylonate. The sequence is that of D-xylonolactone lactonase from Caulobacter vibrioides (strain ATCC 19089 / CIP 103742 / CB 15) (Caulobacter crescentus).